Consider the following 215-residue polypeptide: Ras-related protein Rab-5A (215 aa).

Residues S29, A30, G32, K33, S34, S35, H46, E47, T52, and G78 each contribute to the GTP site. S34 serves as a coordination point for Mg(2+). Short sequence motifs (switch) lie at residues 44–56 (QFHEFQESTIGAA) and 77–93 (AGQERYHSLAPMYYRGA). T52 serves as a coordination point for Mg(2+). At S84 the chain carries Phosphoserine. Residues N133, K134, D136, A164, and K165 each contribute to the GTP site. Positions 181–215 (LPKNEPQNPGANSARGRGVDLTEPAQPARSQCCSN) are disordered. Residues C212 and C213 are each lipidated (S-geranylgeranyl cysteine).

Belongs to the small GTPase superfamily. Rab family. Interacts with GDI1; this promotes dissociation from membranes; phosphorylation at Ser-84 disrupts this interaction. Interacts with GDI2; phosphorylation at Ser-84 disrupts the interaction. Interacts with EEA1. Interacts with RIN1 and GAPVD1, which regulate its pathway, probably by acting as a GEF. Interacts with RINL. Interacts with ALS2CL, SUN2, ZFYVE20 and RUFY1. Interacts with RABEP1; one RABEP1 homodimer binds two RAB5A chains, but at opposite sides of the dimer. Interacts with SGSM1 and SGSM3. Interacts with PIK3CB. Interacts with OCRL and INPP5F. May be a component of a complex composed of RAB5A, DYN2 and PIK3C3. Does not interact with BLOC-3 complex (heterodimer of HPS1 and HPS4). Interacts with CLN5. Interacts with APPL2. Interacts with F8A1/F8A2/F8A3. Found in a complex with F8A1/F8A2/F8A3, HTT and RAB5A; mediates the recruitment of HTT by RAB5A onto early endosomes. Interacts with ATP9A. Interacts with PPP1R21; mediates the recruitment of FERRY complex by RAB5A onto early endosomes. It depends on Mg(2+) as a cofactor. Post-translationally, phosphorylation of Ser-84 in the switch II region by LRRK2 prevents the association of RAB regulatory proteins, including RAB GDP dissociation inhibitors GDI1 and GDI2.

Its subcellular location is the cell membrane. The protein localises to the early endosome membrane. It localises to the melanosome. The protein resides in the cytoplasmic vesicle. It is found in the cell projection. Its subcellular location is the ruffle. The protein localises to the membrane. It localises to the cytoplasm. The protein resides in the cytosol. It is found in the phagosome membrane. Its subcellular location is the endosome membrane. It catalyses the reaction GTP + H2O = GDP + phosphate + H(+). With respect to regulation, regulated by guanine nucleotide exchange factors (GEFs) including RINL, which promote the exchange of bound GDP for free GTP. Regulated by GTPase activating proteins (GAPs) which increase the GTP hydrolysis activity. Inhibited by GDP dissociation inhibitors (GDIs). In terms of biological role, the small GTPases Rab are key regulators of intracellular membrane trafficking, from the formation of transport vesicles to their fusion with membranes. Rabs cycle between an inactive GDP-bound form and an active GTP-bound form that is able to recruit to membranes different sets of downstream effectors directly responsible for vesicle formation, movement, tethering and fusion. RAB5A is required for the fusion of plasma membranes and early endosomes. Contributes to the regulation of filopodia extension. Required for the exosomal release of SDCBP, CD63, PDCD6IP and syndecan. Regulates maturation of apoptotic cell-containing phagosomes, probably downstream of DYN2 and PIK3C3. This chain is Ras-related protein Rab-5A, found in Mus musculus (Mouse).